Here is a 66-residue protein sequence, read N- to C-terminus: Large ribosomal subunit protein bL33c (66 aa).

It belongs to the bacterial ribosomal protein bL33 family.

It is found in the plastid. The protein resides in the chloroplast. The sequence is that of Large ribosomal subunit protein bL33c from Calycanthus floridus var. glaucus (Eastern sweetshrub).